The sequence spans 131 residues: Small ribosomal subunit protein uS8 (131 aa).

Belongs to the universal ribosomal protein uS8 family. As to quaternary structure, part of the 30S ribosomal subunit. Contacts proteins S5 and S12.

In terms of biological role, one of the primary rRNA binding proteins, it binds directly to 16S rRNA central domain where it helps coordinate assembly of the platform of the 30S subunit. This is Small ribosomal subunit protein uS8 from Legionella pneumophila (strain Paris).